Here is a 64-residue protein sequence, read N- to C-terminus: Small ribosomal subunit protein bS21 (64 aa).

It belongs to the bacterial ribosomal protein bS21 family.

This Neorickettsia sennetsu (strain ATCC VR-367 / Miyayama) (Ehrlichia sennetsu) protein is Small ribosomal subunit protein bS21.